The sequence spans 380 residues: Protein phosphatase methylesterase 1 (380 aa).

The tract at residues 1-38 (MSALEKSMHLGRLPSRPPLPGSGGSQSGAKMRMGPGRK) is disordered. At serine 15 the chain carries Phosphoserine. Asymmetric dimethylarginine; alternate is present on arginine 16. Position 16 is an omega-N-methylarginine; alternate (arginine 16). Residue serine 42 is modified to Phosphoserine. Residues serine 156 and aspartate 181 contribute to the active site. The span at 255 to 265 (IEEEEEDEEGS) shows a compositional bias: acidic residues. The tract at residues 255–280 (IEEEEEDEEGSESVNKRKKEDDMETK) is disordered. The segment covering 268 to 280 (VNKRKKEDDMETK) has biased composition (basic and acidic residues). Residue histidine 349 is part of the active site.

Belongs to the AB hydrolase superfamily. As to quaternary structure, binds PPP2CA and PPP2CB. In terms of processing, phosphorylated by SIK1 following increases in intracellular sodium, leading to dissociation from the protein phosphatase 2A (PP2A) complex and subsequent dephosphorylation of sodium/potassium-transporting ATPase ATP1A1.

The catalysed reaction is [phosphatase 2A protein]-C-terminal L-leucine methyl ester + H2O = [phosphatase 2A protein]-C-terminal L-leucine + methanol + H(+). Functionally, demethylates proteins that have been reversibly carboxymethylated. Demethylates PPP2CB (in vitro) and PPP2CA. Binding to PPP2CA displaces the manganese ion and inactivates the enzyme. In Bos taurus (Bovine), this protein is Protein phosphatase methylesterase 1 (PPME1).